We begin with the raw amino-acid sequence, 73 residues long: Beta-defensin 50 (73 aa).

Positions 1 to 23 (MKTLHLLLLISGLLSVFVKGVGS) are cleaved as a signal peptide. 2 cysteine pairs are disulfide-bonded: C34–C63 and C46–C64.

It belongs to the beta-defensin family.

It is found in the secreted. Functionally, has bactericidal activity. The polypeptide is Beta-defensin 50 (Defb50) (Rattus norvegicus (Rat)).